A 383-amino-acid chain; its full sequence is Mating-type protein MAT-1 (383 aa).

A DNA-binding region (alpha box) is located at residues 60-117 (KARKALNAFVGFRCYYVTIPMFKSWPMKKLSNLIGLLWEADPNKSLWSLMAKAWSTIR).

The protein belongs to the MATALPHA1 family.

It localises to the nucleus. Its function is as follows. Mating type proteins are sequence specific DNA-binding proteins that act as master switches in fungal differentiation by controlling gene expression in a cell type-specific fashion. Transcriptional activator that induces the transcription of alpha-specific genes. This is Mating-type protein MAT-1 (MAT1) from Cochliobolus heterostrophus (Southern corn leaf blight fungus).